The sequence spans 181 residues: Resolvase/recombinase (181 aa).

Positions 2-137 constitute a Resolvase/invertase-type recombinase catalytic domain; the sequence is RLFGYARVST…EGRLEAKAKG (136 aa). Catalysis depends on serine 10, which acts as the O-(5'-phospho-DNA)-serine intermediate. The H-T-H motif DNA-binding region spans 161 to 180; it reads AMEIAKRLKIGRSTVYKVLA.

It belongs to the site-specific recombinase resolvase family.

Functionally, site-specific recombination protein. In Pseudomonas putida (Arthrobacter siderocapsulatus), this protein is Resolvase/recombinase.